Reading from the N-terminus, the 563-residue chain is MSSSPPALKKFRKRSPKSCLICRRRKVKCDRQQPCSRCKERNEVCTYADDTIDKMNVGPHPSHSENASDSETTLEVSPDINPKKNEKFDFYGWRSLFELIKYRKDSDMCSSRPSFSIQAYSSYKDNVVVESLANLLPPFCISQKIVNLFFKTLNVVCPIYDQETVEKSLNNIESPESFSYEDAFTLLPIIAATIQLSDLPDVILNFYNSAGITPLESSRLINLKLNEISEQEYKHLCLPDKEIIQMLLLRAYATKFRTRIRGVNTDLCRSIHVSTLVTPLFQVTEKIGKNTSDLWFALCEIDGLECVLKYRPPFIQHDTYGRLKPLRCFFNDDISYNFHLLLGRLLDCGVSIYKSVHSLTVSKFIDKLESYESQLSLILVDIEAKFYDPSNEDIQFRYIFLKMVFWTARVNLYQCFITLDSGILEDEETIIGNLGESCIQCVRLLISQITILEKRGWLLVALLEIIHALMLAAFCRDKGFEVPSDLGDITLYVQERMVDIVTFDDGMAVRFGYVLRFINSMLHPNEPPMQDAEPETTEDPSKLFADIFDFTSNYFIPSALLDQ.

Positions 19–45 form a DNA-binding region, zn(2)-C6 fungal-type; sequence CLICRRRKVKCDRQQPCSRCKERNEVC. A disordered region spans residues 56–78; sequence NVGPHPSHSENASDSETTLEVSP. Residues 64-75 are compositionally biased toward polar residues; it reads SENASDSETTLE.

It localises to the nucleus. This is an uncharacterized protein from Schizosaccharomyces pombe (strain 972 / ATCC 24843) (Fission yeast).